Reading from the N-terminus, the 89-residue chain is Small ribosomal subunit protein uS14A (89 aa).

The protein belongs to the universal ribosomal protein uS14 family. As to quaternary structure, part of the 30S ribosomal subunit. Contacts proteins S3 and S10.

In terms of biological role, binds 16S rRNA, required for the assembly of 30S particles and may also be responsible for determining the conformation of the 16S rRNA at the A site. The sequence is that of Small ribosomal subunit protein uS14A from Bacillus licheniformis (strain ATCC 14580 / DSM 13 / JCM 2505 / CCUG 7422 / NBRC 12200 / NCIMB 9375 / NCTC 10341 / NRRL NRS-1264 / Gibson 46).